We begin with the raw amino-acid sequence, 144 residues long: Ribosome-binding factor A (144 aa).

Positions 120–144 (DKRRMAESGREEDDAAPDETTEDNA) are disordered. Residues 129 to 144 (REEDDAAPDETTEDNA) show a composition bias toward acidic residues.

Belongs to the RbfA family. In terms of assembly, monomer. Binds 30S ribosomal subunits, but not 50S ribosomal subunits or 70S ribosomes.

Its subcellular location is the cytoplasm. Functionally, one of several proteins that assist in the late maturation steps of the functional core of the 30S ribosomal subunit. Associates with free 30S ribosomal subunits (but not with 30S subunits that are part of 70S ribosomes or polysomes). Required for efficient processing of 16S rRNA. May interact with the 5'-terminal helix region of 16S rRNA. The chain is Ribosome-binding factor A from Aeromonas hydrophila subsp. hydrophila (strain ATCC 7966 / DSM 30187 / BCRC 13018 / CCUG 14551 / JCM 1027 / KCTC 2358 / NCIMB 9240 / NCTC 8049).